The sequence spans 317 residues: Tricarboxylate transport protein B, mitochondrial (317 aa).

A propeptide spans 1-20 (removed in mature form); that stretch reads MSGSPKFVSPFHRPHCLSAA. Solcar repeat units follow at residues 29–117, 128–214, and 224–309; these read THPG…LSNQ, TRGL…LRNW, and INPV…VVKV. Transmembrane regions (helical) follow at residues 35-55, 130-150, 223-243, and 294-314; these read ILAG…TEYV, GLIC…CPME, SINP…SVFG, and MDVA…NKVW.

Belongs to the mitochondrial carrier (TC 2.A.29) family. In terms of processing, possesses a short cleavable presequence, which, however, is found to be dispensable both for targeting to mitochondria and insertion into the inner membrane. However, the presequence is required to keep SLC25A1 in a soluble state and thus in an import-competent state. Mature SLC25A1 lacking the presequence is prone to aggregation.

It localises to the mitochondrion inner membrane. It catalyses the reaction (S)-malate(in) + citrate(out) = (S)-malate(out) + citrate(in). The catalysed reaction is D-threo-isocitrate(in) + citrate(out) = D-threo-isocitrate(out) + citrate(in). It carries out the reaction citrate(out) + succinate(in) = citrate(in) + succinate(out). The enzyme catalyses cis-aconitate(in) + citrate(out) = cis-aconitate(out) + citrate(in). It catalyses the reaction trans-aconitate(in) + citrate(out) = trans-aconitate(out) + citrate(in). The catalysed reaction is phosphoenolpyruvate(in) + citrate(out) = phosphoenolpyruvate(out) + citrate(in). It carries out the reaction maleate(in) + citrate(out) = maleate(out) + citrate(in). Functionally, mitochondrial electroneutral antiporter that exports citrate from the mitochondria into the cytosol in exchange for malate. Also able to mediate the exchange of citrate for isocitrate, phosphoenolpyruvate, cis-aconitate and to a lesser extent trans-aconitate, maleate and succinate. In the cytoplasm, citrate plays important roles in fatty acid and sterol synthesis, regulation of glycolysis, protein acetylation, and other physiopathological processes. This is Tricarboxylate transport protein B, mitochondrial from Danio rerio (Zebrafish).